Here is a 360-residue protein sequence, read N- to C-terminus: Ferrochelatase (360 aa).

Fe cation-binding residues include H210 and E291.

It belongs to the ferrochelatase family.

It localises to the cytoplasm. It carries out the reaction heme b + 2 H(+) = protoporphyrin IX + Fe(2+). It functions in the pathway porphyrin-containing compound metabolism; protoheme biosynthesis; protoheme from protoporphyrin-IX: step 1/1. Functionally, catalyzes the ferrous insertion into protoporphyrin IX. In Pseudoalteromonas atlantica (strain T6c / ATCC BAA-1087), this protein is Ferrochelatase.